Here is a 684-residue protein sequence, read N- to C-terminus: Beta-taxilin (684 aa).

Polar residues predominate over residues 1 to 26 (MEANHSEQLSAERQSTPPGDSSSLPS). The interval 1-132 (MEANHSEQLS…KEPVSNKEQK (132 aa)) is disordered. Basic and acidic residues predominate over residues 45–64 (PEKEASVHPDISEELNRQLE). Residues 93-107 (ESPDNEDGDCEETTE) are compositionally biased toward acidic residues. 2 coiled-coil regions span residues 135–351 (KKIL…VLKE) and 378–467 (NEVF…SEKD). Residues 458 to 475 (IRDAEISEKDDQSQHNSD) are compositionally biased toward basic and acidic residues. Disordered regions lie at residues 458–485 (IRDAEISEKDDQSQHNSDEEPESNVSVD), 514–632 (ESTP…DVPA), and 646–684 (PACEPSRQPPRAAAEELPVGASAGPQPRNVADTNLEGVD). 2 positions are modified to phosphoserine: serine 474 and serine 483. Residues 514 to 524 (ESTPHQSKETQ) are compositionally biased toward basic and acidic residues. The segment covering 613–622 (QAPQAPTEAS) has biased composition (polar residues).

Belongs to the taxilin family. In terms of assembly, binds to the C-terminal coiled coil region of syntaxin family members STX1A, STX3A and STX4A. Has a preference for STX1A. In terms of tissue distribution, expressed in skeletal muscle.

Promotes motor nerve regeneration. May be involved in intracellular vesicle traffic. In Homo sapiens (Human), this protein is Beta-taxilin (TXLNB).